A 279-amino-acid chain; its full sequence is Octanoyl-[GcvH]:protein N-octanoyltransferase (279 aa).

Residues 41–247 form the BPL/LPL catalytic domain; that stretch reads DLSCNVVRTW…ALKDLGANLN (207 aa). The Acyl-thioester intermediate role is filled by Cys-146.

This sequence belongs to the octanoyltransferase LipL family.

The catalysed reaction is N(6)-octanoyl-L-lysyl-[glycine-cleavage complex H protein] + L-lysyl-[lipoyl-carrier protein] = N(6)-octanoyl-L-lysyl-[lipoyl-carrier protein] + L-lysyl-[glycine-cleavage complex H protein]. It functions in the pathway protein modification; protein lipoylation via endogenous pathway; protein N(6)-(lipoyl)lysine from octanoyl-[acyl-carrier-protein]. Its function is as follows. Catalyzes the amidotransfer (transamidation) of the octanoyl moiety from octanoyl-GcvH to the lipoyl domain of the E2 subunit of lipoate-dependent enzymes. The sequence is that of Octanoyl-[GcvH]:protein N-octanoyltransferase from Staphylococcus epidermidis (strain ATCC 35984 / DSM 28319 / BCRC 17069 / CCUG 31568 / BM 3577 / RP62A).